Consider the following 1337-residue polypeptide: Partitioning defective 3 homolog (1337 aa).

The residue at position 25 (S25) is a Phosphoserine. 2 disordered regions span residues 81–109 (EQDPHHGGDGTSASSTGTQSPEIFGSELG) and 143–263 (SSDP…LENM). T91 carries the phosphothreonine modification. The span at 91 to 100 (TSASSTGTQS) shows a compositional bias: low complexity. Polar residues-rich tracts occupy residues 150–163 (GLSTSVSDNNFSSE) and 171–188 (TRWSTTAGFLKQNTTGSP). Residues S156 and S174 each carry the phosphoserine modification. Positions 190-203 (TCDRKKDENYRSLP) are enriched in basic and acidic residues. The segment covering 207–224 (SSWSNQFQRDNARSSLSA) has biased composition (polar residues). Residues 271–359 (MVKLVQVPND…ARVIWFHVVP (89 aa)) form the PDZ 1 domain. Residue S383 is modified to Phosphoserine. The tract at residues 397–441 (NAPQALPRAPRLSQPPEQLDAHPRLPHSAHASTKPPTAPALAPPN) is disordered. PDZ domains lie at 461–546 (NIQL…LVFR) and 590–677 (EVPL…GMIQ). At Y489 the chain carries Phosphotyrosine. Phosphoserine is present on residues S692, S695, S715, S728, S809, and S827. The interaction with PRKCI and PRKCZ stretch occupies residues 712 to 936 (RRISHSLYSG…AAIDKSYDKP (225 aa)). The residue at position 834 (K834) is an N6-acetyllysine. S837 carries the post-translational modification Phosphoserine. An N6-acetyllysine modification is found at K851. S852 and S873 each carry phosphoserine. Disordered regions lie at residues 866-888 (VDDQRAGSPNRDVGPSLGLKKSS), 932-1015 (SYDK…AKKG), 1028-1055 (KHRKDDKMEKMGRIKIQDSFTSEEDRVR), 1110-1271 (LNAR…LGGH), and 1284-1337 (LLRQ…PFYS). K885 is subject to N6-acetyllysine. The segment at 935-1337 (KPMVDDDDEG…TPEKGRPFYS (403 aa)) is interaction with FRMD4A. Residues 939–953 (DDDDEGMETLEEDTE) show a composition bias toward acidic residues. At S962 the chain carries Phosphoserine; by AURKA. S971 and S973 each carry phosphoserine. Basic and acidic residues-rich tracts occupy residues 981–1009 (DPEKRDKAEKKKDKAGKDKKKDREKEKDK) and 1030–1043 (RKDDKMEKMGRIKI). S1046 is subject to Phosphoserine. Residues 1050-1082 (EEDRVRMKEEQERIQAKTREFRERQARERDYAE) adopt a coiled-coil conformation. Positions 1138–1147 (PGDSNRSTPS) are enriched in polar residues. Over residues 1148–1175 (NHDRIQRLRQEFQQAKQDEDVEDRRRTY) the composition is skewed to basic and acidic residues. Coiled-coil stretches lie at residues 1149–1172 (HDRIQRLRQEFQQAKQDEDVEDRR), 1199–1222 (VQVQRQRQEERESFQQAQRQYSSL), and 1278–1299 (MLETQELLRQEQRRKEQQLKKQ). Residues 1180–1203 (SWSSSRPASQSGRHSVSVEVQVQR) are compositionally biased toward low complexity. Over residues 1219 to 1240 (YSSLPRQSRKNASSVSQDSWEQ) the composition is skewed to polar residues. Positions 1284–1296 (LLRQEQRRKEQQL) are enriched in basic and acidic residues. Residues 1318–1327 (SQVARLNRLQ) show a composition bias toward polar residues. Basic and acidic residues predominate over residues 1328-1337 (TPEKGRPFYS). K1331 carries the N6-acetyllysine modification.

This sequence belongs to the PAR3 family. In terms of assembly, component of a complex whose core is composed of ARHGAP17, AMOT, PALS1, PATJ and PARD3/PAR3. Interacts (via PDZ 1 domain) with PARD6A, PARD6B and F11R/JAM1. Interacts with AURKA, AURKB and SIRT2. Interacts with PRKCI. Interacts with PRKCZ. Part of a complex with PARD6A or PARD6B, PRKCI or PRKCZ and CDC42 or RAC1. Interacts with LIMK2 and CDH5. Component of the Par polarity complex, composed of at least phosphorylated PRKCZ, PARD3 and TIAM1. Directly interacts with TIAM1 and TIAM2. Interacts with ECT2 and FBF1. Interacts (via PDZ 3 domain) with PTEN (via C-terminus). Interacts (via coiled-coil domain) with FRMD4A. Found in a complex with PARD3, CYTH1 and FRMD4A. Interacts with SAPCD2. Interacts with PRKCA. Interacts with PRKCZ. Post-translationally, acetylated. Deacetylated by SIRT2, thereby inhibiting Schwann cell peripheral myelination. In terms of processing, phosphorylation at Ser-827 by PRKCZ and PRKCI occurs at the most apical tip of epithelial cell-cell contacts during the initial phase of tight junction formation and may promote dissociation of the complex with PARD6. EGF-induced Tyr-1127 phosphorylation mediates dissociation from LIMK2. Phosphorylation by AURKA at Ser-962 is required for the normal establishment of neuronal polarity. In terms of tissue distribution, isoform 1 is predominantly expressed in lung, glandular stomach, prostate, ovary and uterus. Isoform 1 is also expressed in brain, with a high expression in the cortex, hippocampus and in the striatum. Isoform 2 is predominantly expressed in intestinal epithelial cells, kidney and prostate.

It localises to the cytoplasm. Its subcellular location is the endomembrane system. The protein localises to the cell junction. It is found in the tight junction. The protein resides in the adherens junction. It localises to the cell cortex. Its subcellular location is the cytoskeleton. The protein localises to the cell membrane. In terms of biological role, adapter protein involved in asymmetrical cell division and cell polarization processes. Seems to play a central role in the formation of epithelial tight junctions. Association with PARD6B may prevent the interaction of PARD3 with F11R/JAM1, thereby preventing tight junction assembly. The PARD6-PARD3 complex links GTP-bound Rho small GTPases to atypical protein kinase C proteins. Required for establishment of neuronal polarity and normal axon formation in cultured hippocampal neurons. Involved in Schwann cell peripheral myelination. Targets the phosphatase PTEN to cell junctions. The polypeptide is Partitioning defective 3 homolog (Pard3) (Rattus norvegicus (Rat)).